Consider the following 352-residue polypeptide: Isoflavone-7-O-methyltransferase 6 (352 aa).

118 to 127 provides a ligand contact to substrate; it reads VLDPTLSGSY. S-adenosyl-L-methionine is bound by residues G196, D219, D239, M240, and K253. H257 functions as the Proton acceptor in the catalytic mechanism.

This sequence belongs to the class I-like SAM-binding methyltransferase superfamily. Cation-independent O-methyltransferase family. COMT subfamily. In terms of assembly, homodimer.

It carries out the reaction a 7-hydroxyisoflavone + S-adenosyl-L-methionine = a 7-methoxyisoflavone + S-adenosyl-L-homocysteine + H(+). It participates in phytoalexin biosynthesis; medicarpin biosynthesis. In terms of biological role, transfers a methyl group to 7-hydroxyls of the isoflavones daidzein, genistein and 6,7,4'-trihydroxyisoflavone. Can also methylate (+)6a-hydroxymaackiain with lower efficiency. In Medicago sativa (Alfalfa), this protein is Isoflavone-7-O-methyltransferase 6.